Consider the following 595-residue polypeptide: MYRPDHVFVILCAVFFTGQVTAVPAGTGITHPHSPQLGPFEPVGFASQTQTQLAPSRGPFTWLRDSVIERIWGIDKEKQSLSKPGPRPVPEKSWSRYGSDIVLRIEVHNAEEVEALAEAVNILFLDVWDSNENYVDIRLAKEVVPSLLGLLPQSLQKTHTLLIEDLSKMIYESQYPSRGFKHHKNDQTTRHTGFQSSDVGDLFFDNYQPFPVILQWMRLLVSMFPSHVQLINVGVTHEGRDIPAFRLGARPSGDQNEEPRKTVMIVGGSHAREWISTSTVAYIAFQLITEFGNSPPITKLLEDFDWILVPTINPDGYVYSWDMDRLWRKNRQQTGLPFCPGIDLDRSWGYEWDGQGTRANPCSESYAGNNAFDSMETRTIAEWAYNQTQNKQSDFVGFLDLHSYSQQILYPYSYSCSTVPPTLENLEELAFGIAKAIRMTNQETYVVKSACEGVVTTEKGTGQRVSTNVESTGGSALDWFYHQLHAKYSYQIKLRDKGMYGFLLPPENIVPTGREIFNSVLVLGHFLLGEGANGLEWSFLSGSGSAAGKEDDSSRTFDRLFFDNNEEQLEKSADDRDYFSVVEEDVYQDEGWGLW.

The signal sequence occupies residues 1–22 (MYRPDHVFVILCAVFFTGQVTA). A propeptide spanning residues 23–178 (VPAGTGITHP…MIYESQYPSR (156 aa)) is cleaved from the precursor. Residues 206 to 527 (NYQPFPVILQ…NSVLVLGHFL (322 aa)) form the Peptidase M14 domain. Residues histidine 270 and glutamate 273 each contribute to the Zn(2+) site. Substrate is bound by residues 270–273 (HARE), arginine 328, and 345–346 (DR). Cysteine 339 and cysteine 362 are oxidised to a cystine. Asparagine 386 carries an N-linked (GlcNAc...) asparagine glycan. Histidine 402 lines the Zn(2+) pocket. 403–404 (SY) contributes to the substrate binding site.

Belongs to the peptidase M14 family. It depends on Zn(2+) as a cofactor.

The protein localises to the vacuole. Its subcellular location is the secreted. Its function is as follows. Inactive carboxypeptidase that may play a role in cell wall organization and biogenesis. This is Inactive metallocarboxypeptidase ecm14 (ecm14) from Talaromyces marneffei (strain ATCC 18224 / CBS 334.59 / QM 7333) (Penicillium marneffei).